The chain runs to 306 residues: Ribonuclease Z (306 aa).

The Zn(2+) site is built by H63, H65, D67, H68, H141, D211, and H269. D67 serves as the catalytic Proton acceptor.

This sequence belongs to the RNase Z family. As to quaternary structure, homodimer. Zn(2+) is required as a cofactor.

The enzyme catalyses Endonucleolytic cleavage of RNA, removing extra 3' nucleotides from tRNA precursor, generating 3' termini of tRNAs. A 3'-hydroxy group is left at the tRNA terminus and a 5'-phosphoryl group is left at the trailer molecule.. In terms of biological role, zinc phosphodiesterase, which displays some tRNA 3'-processing endonuclease activity. Probably involved in tRNA maturation, by removing a 3'-trailer from precursor tRNA. This is Ribonuclease Z from Staphylococcus aureus (strain USA300).